We begin with the raw amino-acid sequence, 31 residues long: Monocyclic monoterpene ketone monooxygenase (31 aa).

Position 20–25 (20–25 (GAGFXG)) interacts with FAD.

In terms of assembly, monomer. It depends on FAD as a cofactor.

It catalyses the reaction 1-hydroxylimonen-2-one + NADPH + O2 = 3-isopropenyl-6-oxoheptanoate + NADP(+) + H2O. The enzyme catalyses (1R,4S)-1-hydroxylimonen-2-one + NADPH + O2 + H(+) = (4S,7S)-7-hydroxy-4-isopropenyl-7-methyloxepan-2-one + NADP(+) + H2O. It carries out the reaction (1S,4R)-1-hydroxylimonen-2-one + NADPH + O2 + H(+) = (4R,7R)-7-hydroxy-4-isopropenyl-7-methyloxepan-2-one + NADP(+) + H2O. The catalysed reaction is (1R,4R)-dihydrocarvone + NADPH + O2 + H(+) = (4R,7R)-4-isopropenyl-7-methyloxepan-2-one + NADP(+) + H2O. It catalyses the reaction (1S,4R)-menthone + NADPH + O2 + H(+) = (4S,7R)-7-isopropyl-4-methyloxepan-2-one + NADP(+) + H2O. The enzyme catalyses (1R,4S)-menthone + NADPH + O2 + H(+) = (4R,7S)-7-isopropyl-4-methyloxepan-2-one + NADP(+) + H2O. It carries out the reaction (1S,4R)-isodihydrocarvone + NADPH + O2 + H(+) = (3S,6R)-6-isopropenyl-3-methyloxepan-2-one + NADP(+) + H2O. It participates in terpene metabolism; monoterpene degradation. In terms of biological role, catalyzes the NADPH- and oxygen-dependent oxidation of the monocyclic monoterpene ketones 1-hydroxy-2-oxolimonene, dihydrocarvone and menthone. Is able to convert all enantiomers of these natural substrates with almost equal efficiency. Is thus involved in the conversion of the monocyclic monoterpene ketone intermediates formed in the degradation pathways of all stereoisomers of three different monocyclic monoterpenes, i.e. limonene, (dihydro)carveol and menthol, which likely make R.erythropolis able to grow on these compounds as the sole source of carbon and energy. In Rhodococcus erythropolis (Arthrobacter picolinophilus), this protein is Monocyclic monoterpene ketone monooxygenase.